Consider the following 151-residue polypeptide: UPF0178 protein PMI1258 (151 aa).

This sequence belongs to the UPF0178 family.

The protein is UPF0178 protein PMI1258 of Proteus mirabilis (strain HI4320).